Here is a 1070-residue protein sequence, read N- to C-terminus: DNA double-strand break repair Rad50 ATPase (1070 aa).

ATP-binding positions include Arg12, 32-38, and Gln142; that span reads NGSGKSS. Coiled-coil stretches lie at residues 227 to 257, 369 to 403, and 449 to 478; these read LEEL…RLQE, ECRT…EKAG, and LREL…KEIR. In terms of domain architecture, Zinc-hook spans 508 to 607; it reads LENLEDFNEL…KLNRLKEAKK (100 aa). Zn(2+)-binding residues include Cys555 and Cys558. Coiled-coil stretches lie at residues 570-614 and 878-908; these read TAEE…QAYD and LKRL…ADEL. 969–974 serves as a coordination point for ATP; it reads LLSGGE.

Belongs to the SMC family. RAD50 subfamily. As to quaternary structure, homodimer. Forms a heterotetramer composed of two Mre11 subunits and two Rad50 subunits. Zn(2+) is required as a cofactor.

Part of the Rad50/Mre11 complex, which is involved in the early steps of DNA double-strand break (DSB) repair. The complex may facilitate opening of the processed DNA ends to aid in the recruitment of HerA and NurA. Rad50 controls the balance between DNA end bridging and DNA resection via ATP-dependent structural rearrangements of the Rad50/Mre11 complex. In Methanosarcina mazei (strain ATCC BAA-159 / DSM 3647 / Goe1 / Go1 / JCM 11833 / OCM 88) (Methanosarcina frisia), this protein is DNA double-strand break repair Rad50 ATPase.